Reading from the N-terminus, the 376-residue chain is C2H2 type master regulator of conidiophore development brlA (376 aa).

Residues 20-29 (TSFSSASSSA) show a composition bias toward low complexity. Disordered stretches follow at residues 20 to 47 (TSFS…ELSL), 197 to 229 (HHHH…ASPN), and 241 to 267 (EAQR…PESG). A compositionally biased stretch (polar residues) spans 34–44 (TPSSRRSTPNE). The span at 197-209 (HHHHHNHHQHHHA) shows a compositional bias: basic residues. Over residues 219–229 (QLHSNTGASPN) the composition is skewed to polar residues. Residues 241 to 256 (EAQRKTSELQRAQIRE) show a composition bias toward basic and acidic residues. A C2H2-type 1; degenerate zinc finger spans residues 277-301 (CKCDYPGCNKAFRRNEHLKRHKQTF). The C2H2-type 2 zinc-finger motif lies at 309-332 (FSCEFCGKDQFNRQDNLNNHRKLH). Residues 351 to 376 (IIEHEERSRKRRAPPKSKAEKRDYDF) form a disordered region. Residues 367–376 (SKAEKRDYDF) show a composition bias toward basic and acidic residues.

It localises to the nucleus. Its function is as follows. BrlA, abaA and wetA are pivotal regulators of conidiophore development and conidium maturation. They act individually and together to regulate their own expression and that of numerous other sporulation-specific genes. Binds promoters of target genes at brlA response elements (BREs) containing the conserved sequence 5'-(C/A)(A/G)AGGG(G/A)-3'. This is C2H2 type master regulator of conidiophore development brlA from Hapsidospora chrysogena (Acremonium chrysogenum).